Consider the following 293-residue polypeptide: Ribosomal RNA small subunit methyltransferase A (293 aa).

S-adenosyl-L-methionine contacts are provided by Asn38, Val40, Gly65, Glu86, Asp116, and Asn133.

It belongs to the class I-like SAM-binding methyltransferase superfamily. rRNA adenine N(6)-methyltransferase family. RsmA subfamily.

It is found in the cytoplasm. It carries out the reaction adenosine(1518)/adenosine(1519) in 16S rRNA + 4 S-adenosyl-L-methionine = N(6)-dimethyladenosine(1518)/N(6)-dimethyladenosine(1519) in 16S rRNA + 4 S-adenosyl-L-homocysteine + 4 H(+). Functionally, specifically dimethylates two adjacent adenosines (A1518 and A1519) in the loop of a conserved hairpin near the 3'-end of 16S rRNA in the 30S particle. May play a critical role in biogenesis of 30S subunits. This chain is Ribosomal RNA small subunit methyltransferase A, found in Paenarthrobacter aurescens (strain TC1).